Consider the following 320-residue polypeptide: Probable L,D-transpeptidase YcfS (320 aa).

Residues 1–23 (MMIKTRFSRWLTFFTFAAAVALA) form the signal peptide. One can recognise a LysM domain in the interval 45–90 (KFHVVENDGGSLEAIAKKYNVGFLALLQANPGVDPYVPRAGSVLTI). One can recognise a L,D-TPase catalytic domain in the interval 102 to 241 (EGIVINIAEL…VTPGTKVNII (140 aa)). Residue H201 is the Proton donor/acceptor of the active site. C217 serves as the catalytic Nucleophile.

This sequence belongs to the YkuD family. As to quaternary structure, interacts with DsbG.

The protein localises to the periplasm. It participates in cell wall biogenesis; peptidoglycan biosynthesis. Functionally, responsible, at least in part, for anchoring of the major outer membrane lipoprotein (Lpp, also known as the Braun lipoprotein) to the peptidoglycan via a meso-diaminopimelyl-L-Lys- bond on the terminal residue of Lpp. This is Probable L,D-transpeptidase YcfS (ycfS) from Escherichia coli (strain K12).